Consider the following 512-residue polypeptide: ATP synthase subunit alpha (512 aa).

169–176 (GDRQTGKT) lines the ATP pocket.

This sequence belongs to the ATPase alpha/beta chains family. In terms of assembly, F-type ATPases have 2 components, CF(1) - the catalytic core - and CF(0) - the membrane proton channel. CF(1) has five subunits: alpha(3), beta(3), gamma(1), delta(1), epsilon(1). CF(0) has three main subunits: a(1), b(2) and c(9-12). The alpha and beta chains form an alternating ring which encloses part of the gamma chain. CF(1) is attached to CF(0) by a central stalk formed by the gamma and epsilon chains, while a peripheral stalk is formed by the delta and b chains.

The protein resides in the cell inner membrane. It catalyses the reaction ATP + H2O + 4 H(+)(in) = ADP + phosphate + 5 H(+)(out). Produces ATP from ADP in the presence of a proton gradient across the membrane. The alpha chain is a regulatory subunit. This is ATP synthase subunit alpha from Dechloromonas aromatica (strain RCB).